The chain runs to 132 residues: Two-component response regulator ORR42 (132 aa).

The 115-residue stretch at 11 to 125 folds into the Response regulatory domain; the sequence is RALLVEDIKV…LEHILQETRS (115 aa). Asp61 is subject to 4-aspartylphosphate.

The protein belongs to the ARR family. Type-C subfamily. Two-component system major event consists of a His-to-Asp phosphorelay between a sensor histidine kinase (HK) and a response regulator (RR). In plants, the His-to-Asp phosphorelay involves an additional intermediate named Histidine-containing phosphotransfer protein (HPt). This multistep phosphorelay consists of a His-Asp-His-Asp sequential transfer of a phosphate group between first a His and an Asp of the HK protein, followed by the transfer to a conserved His of the HPt protein and finally the transfer to an Asp in the receiver domain of the RR protein.

In terms of biological role, functions as a response regulator involved in His-to-Asp phosphorelay signal transduction system. Phosphorylation of the Asp residue in the receiver domain activates the ability of the protein to promote the transcription of target genes. May directly activate some type-A response regulators in response to cytokinins. In Oryza sativa subsp. japonica (Rice), this protein is Two-component response regulator ORR42.